The primary structure comprises 432 residues: Pachytene checkpoint protein 2 homolog (432 aa).

G179–T186 contacts ATP.

Belongs to the AAA ATPase family. PCH2 subfamily.

Plays a key role in chromosome recombination and chromosome structure development during meiosis. Required at early steps in meiotic recombination that leads to non-crossovers pathways. Also needed for efficient completion of homologous synapsis by influencing crossover distribution along the chromosomes affecting both crossovers and non-crossovers pathways. The sequence is that of Pachytene checkpoint protein 2 homolog (TRIP13) from Gallus gallus (Chicken).